Consider the following 209-residue polypeptide: RNA chaperone ProQ (209 aa).

The disordered stretch occupies residues 101-155 (LAESKAKVQARRKEQAQKAREEGKAKAKPAANKKPQQPRRTNKPKVQKPTKPVET). Positions 111-125 (RRKEQAQKAREEGKA) are enriched in basic and acidic residues. Residues 136 to 148 (QQPRRTNKPKVQK) are compositionally biased toward basic residues.

It belongs to the ProQ family.

It localises to the cytoplasm. Functionally, RNA chaperone with significant RNA binding, RNA strand exchange and RNA duplexing activities. The sequence is that of RNA chaperone ProQ from Vibrio parahaemolyticus serotype O3:K6 (strain RIMD 2210633).